Consider the following 287-residue polypeptide: Inositol-1-monophosphatase (287 aa).

Glutamate 79, aspartate 96, leucine 98, and aspartate 99 together coordinate Mg(2+). Glutamate 79 provides a ligand contact to substrate. Substrate is bound by residues 98–101 (LDGT), arginine 195, and aspartate 224. Mg(2+) is bound at residue aspartate 224.

The protein belongs to the inositol monophosphatase superfamily. Mg(2+) serves as cofactor.

It catalyses the reaction a myo-inositol phosphate + H2O = myo-inositol + phosphate. In Synechocystis sp. (strain ATCC 27184 / PCC 6803 / Kazusa), this protein is Inositol-1-monophosphatase (suhB).